The following is a 266-amino-acid chain: Heat-inducible transcription repressor HrcA (266 aa).

It belongs to the HrcA family.

Negative regulator of class I heat shock genes (grpE-dnaK-dnaJ and groELS operons). Prevents heat-shock induction of these operons. This is Heat-inducible transcription repressor HrcA from Helicobacter pylori (strain J99 / ATCC 700824) (Campylobacter pylori J99).